The sequence spans 461 residues: 3-oxoacyl-[acyl-carrier-protein] synthase, mitochondrial (461 aa).

A mitochondrion-targeting transit peptide spans 1–28; the sequence is MATSNLRRHLSASRLRLNRFISTSSSYH. In terms of domain architecture, Ketosynthase family 3 (KS3) spans 30 to 460; that stretch reads HRRVVVTGLG…GTNASLLFAS (431 aa). Active-site for beta-ketoacyl synthase activity residues include C209, H350, and H389.

It belongs to the thiolase-like superfamily. Beta-ketoacyl-ACP synthases family. In terms of assembly, homodimer. In terms of tissue distribution, expressed at the same level in leaves, roots, siliques and flowers.

It localises to the mitochondrion. The catalysed reaction is a fatty acyl-[ACP] + malonyl-[ACP] + H(+) = a 3-oxoacyl-[ACP] + holo-[ACP] + CO2. It catalyses the reaction butanoyl-[ACP] + malonyl-[ACP] + H(+) = 3-oxohexanoyl-[ACP] + holo-[ACP] + CO2. The enzyme catalyses hexanoyl-[ACP] + malonyl-[ACP] + H(+) = 3-oxooctanoyl-[ACP] + holo-[ACP] + CO2. It carries out the reaction octanoyl-[ACP] + malonyl-[ACP] + H(+) = 3-oxodecanoyl-[ACP] + holo-[ACP] + CO2. The catalysed reaction is decanoyl-[ACP] + malonyl-[ACP] + H(+) = 3-oxododecanoyl-[ACP] + holo-[ACP] + CO2. It catalyses the reaction dodecanoyl-[ACP] + malonyl-[ACP] + H(+) = 3-oxotetradecanoyl-[ACP] + holo-[ACP] + CO2. The enzyme catalyses tetradecanoyl-[ACP] + malonyl-[ACP] + H(+) = 3-oxohexadecanoyl-[ACP] + holo-[ACP] + CO2. It carries out the reaction hexadecanoyl-[ACP] + malonyl-[ACP] + H(+) = 3-oxooctadecanoyl-[ACP] + holo-[ACP] + CO2. It participates in lipid metabolism; fatty acid biosynthesis. Inhibited by cerulenin. In terms of biological role, catalyzes all the condensation reaction of fatty acid synthesis by the addition to an acyl acceptor of two carbons from malonyl-ACP. Able to elongate saturated acyl chains from 4 to at least 16 carbons. Uses malonyl-CoA but not acetyl-CoA as primer substrate. When expressed in a heterologous system, reveals a bimodal distribution of products, with peaks at C8 and C14-C16. The major product of the reaction (octanoyl-ACP) is required for the lipoylation of essential mitochondrial proteins. Required for mitochondrial fatty acid synthesis (mtFAS). MtFAS are essential for photorespiration and plant development, probably by influencing mitochondrial membrane lipid composition and other lipid metabolic pathways. This is 3-oxoacyl-[acyl-carrier-protein] synthase, mitochondrial from Arabidopsis thaliana (Mouse-ear cress).